The primary structure comprises 407 residues: uncharacterized protein (407 aa).

Belongs to the peptidase U32 family.

This is an uncharacterized protein from Methanocaldococcus jannaschii (strain ATCC 43067 / DSM 2661 / JAL-1 / JCM 10045 / NBRC 100440) (Methanococcus jannaschii).